Here is a 191-residue protein sequence, read N- to C-terminus: Ribonuclease MC (191 aa).

Residue Gln-9 participates in RNA binding. The cysteines at positions 15 and 23 are disulfide-linked. RNA contacts are provided by residues His-34, 72 to 73 (NV), Arg-75, Phe-81, 84 to 85 (HE), and 88 to 89 (KH). The active-site Proton donor is His-34. Cystine bridges form between Cys-48/Cys-92, Cys-152/Cys-185, and Cys-169/Cys-180. Glu-85 is an active-site residue. His-89 acts as the Proton acceptor in catalysis.

This sequence belongs to the RNase T2 family.

The catalysed reaction is a ribonucleotidyl-ribonucleotide-RNA + H2O = a 3'-end 3'-phospho-ribonucleotide-RNA + a 5'-end dephospho-ribonucleoside-RNA + H(+). Functionally, ribonuclease cleaving preferentially the 5'-side of uridine. The chain is Ribonuclease MC from Momordica charantia (Bitter gourd).